The following is a 285-amino-acid chain: MLVRPPAVAGTFYPADAEELIRLIEWSFTHPLGPGEVPEVSPVRRKASVGYMVPHAGYIYSGPVAAWSYYHLAQEGAPETVVIIGPNHTGLGPAVSVMPPSIWETPLGGVKTDDEAISELLKVSNVVEEDYSAHAYEHSLEVQLPFLQYLFGDSFRIVPIVMKVQTPSVARLLMQSIKEAMENLGRDYVVLSSSDLNHYEPHDITVEKDMLALEKIVNLDPEGLQEVLVKYDISMCGPGPVMVNMYLDKEYGAERAILLKHATSGDTSGDKSAVVGYAAVKFPLP.

The protein belongs to the MEMO1 family.

This Ignicoccus hospitalis (strain KIN4/I / DSM 18386 / JCM 14125) protein is MEMO1 family protein Igni_0992.